We begin with the raw amino-acid sequence, 89 residues long: UPF0223 protein BCE_4008 (89 aa).

Belongs to the UPF0223 family.

This Bacillus cereus (strain ATCC 10987 / NRS 248) protein is UPF0223 protein BCE_4008.